The following is a 187-amino-acid chain: MAERENRRGNRRDREETPEFADRLVAINRVSKTVKGGKRFGFAALVVVGDQKGRVGFGKGKAKEVPEAIRKATEQAKRQMIRVPLKEGRTLHHDMYGRHGAGKVVMRTAPEGTGIIAGGPMRAVFEMLGIKDVVSKSVGSQNPYNMIRATIDGLKKEQSPRSVAQRRGKKVADILPKRDEAPAEAEA.

The S5 DRBM domain occupies 20–83 (FADRLVAINR…EQAKRQMIRV (64 aa)). A disordered region spans residues 155–187 (KKEQSPRSVAQRRGKKVADILPKRDEAPAEAEA). The span at 170–181 (KVADILPKRDEA) shows a compositional bias: basic and acidic residues.

The protein belongs to the universal ribosomal protein uS5 family. In terms of assembly, part of the 30S ribosomal subunit. Contacts proteins S4 and S8.

In terms of biological role, with S4 and S12 plays an important role in translational accuracy. Its function is as follows. Located at the back of the 30S subunit body where it stabilizes the conformation of the head with respect to the body. This Ruegeria sp. (strain TM1040) (Silicibacter sp.) protein is Small ribosomal subunit protein uS5.